The chain runs to 206 residues: dITP/XTP pyrophosphatase (206 aa).

7–12 lines the substrate pocket; sequence SRNPKK. The active-site Proton acceptor is Asp-72. Asp-72 lines the Mg(2+) pocket. Substrate is bound by residues Ser-73, 155 to 158, Lys-178, and 183 to 184; these read FGYD and HR.

Belongs to the HAM1 NTPase family. As to quaternary structure, homodimer. Mg(2+) is required as a cofactor.

It carries out the reaction XTP + H2O = XMP + diphosphate + H(+). The enzyme catalyses dITP + H2O = dIMP + diphosphate + H(+). The catalysed reaction is ITP + H2O = IMP + diphosphate + H(+). Its function is as follows. Pyrophosphatase that catalyzes the hydrolysis of nucleoside triphosphates to their monophosphate derivatives, with a high preference for the non-canonical purine nucleotides XTP (xanthosine triphosphate), dITP (deoxyinosine triphosphate) and ITP. Seems to function as a house-cleaning enzyme that removes non-canonical purine nucleotides from the nucleotide pool, thus preventing their incorporation into DNA/RNA and avoiding chromosomal lesions. The protein is dITP/XTP pyrophosphatase of Mycobacteroides abscessus (strain ATCC 19977 / DSM 44196 / CCUG 20993 / CIP 104536 / JCM 13569 / NCTC 13031 / TMC 1543 / L948) (Mycobacterium abscessus).